A 422-amino-acid chain; its full sequence is Keratin, type II cytoskeletal 80 (422 aa).

Positions 1 to 82 (MACRSCVVGF…DPAIQQQKNN (82 aa)) are head. A Phosphoserine modification is found at serine 45. Residues 83–118 (EKEEMKVLNDKFASLIGKVQALEQRNQLLETRWHFL) form a coil 1A region. The IF rod domain maps to 83–394 (EKEEMKVLND…KLMEGEESRM (312 aa)). The interval 119 to 135 (QSQDSATFDLGHLYEEY) is linker 1. Residues 136–227 (QGRLQEELRK…SIYEQELKDL (92 aa)) are coil 1B. The tract at residues 228-251 (AAQLKDVSVTVGMDSRCHIDLSGI) is linker 12. Positions 252–390 (VEEVKAQYDA…ATYRKLMEGE (139 aa)) are coil 2. The segment at 391-422 (ESRMDMPSATVVSAVQARCRTAPTLPHPLCSL) is tail.

It belongs to the intermediate filament family. Heterotetramer of two type I and two type II keratins.

The polypeptide is Keratin, type II cytoskeletal 80 (KRT80) (Bos taurus (Bovine)).